We begin with the raw amino-acid sequence, 119 residues long: Phosphoribosyl-AMP cyclohydrolase (119 aa).

Aspartate 78 serves as a coordination point for Mg(2+). Cysteine 79 lines the Zn(2+) pocket. Positions 80 and 82 each coordinate Mg(2+). Residues cysteine 95 and cysteine 102 each contribute to the Zn(2+) site.

It belongs to the PRA-CH family. As to quaternary structure, homodimer. Mg(2+) serves as cofactor. Zn(2+) is required as a cofactor.

Its subcellular location is the cytoplasm. It carries out the reaction 1-(5-phospho-beta-D-ribosyl)-5'-AMP + H2O = 1-(5-phospho-beta-D-ribosyl)-5-[(5-phospho-beta-D-ribosylamino)methylideneamino]imidazole-4-carboxamide. The protein operates within amino-acid biosynthesis; L-histidine biosynthesis; L-histidine from 5-phospho-alpha-D-ribose 1-diphosphate: step 3/9. Its function is as follows. Catalyzes the hydrolysis of the adenine ring of phosphoribosyl-AMP. The polypeptide is Phosphoribosyl-AMP cyclohydrolase (Jannaschia sp. (strain CCS1)).